Reading from the N-terminus, the 989-residue chain is DNA-binding protein SMUBP-2 (989 aa).

Position 2 is an N-acetylalanine (A2). ATP is bound by residues 213–220, Q402, Y441, and E570; that span reads GPPGTGKT. The tract at residues 637–783 is SS DNA-binding; sequence TAFEYLDDIV…KARHITVSRK (147 aa). Disordered stretches follow at residues 650–717, 765–818, and 833–869; these read YTHE…GCDR, LRHD…GQPH, and LQRQ…TKGP. Residues 677 to 690 are compositionally biased toward low complexity; it reads EQENGQEARAAAGQ. The region spanning 721-784 is the R3H domain; the sequence is IDRTEHFRAM…ARHITVSRKS (64 aa). Over residues 765 to 775 the composition is skewed to basic and acidic residues; the sequence is LRHDSTGEGKA. 2 positions are modified to phosphoserine: S797 and S800. Residues 833–842 are compositionally biased toward low complexity; sequence LQRQQGSQAQ. The Nuclear localization signal motif lies at 860–864; the sequence is KKKKK. The segment at 885–934 adopts an AN1-type zinc-finger fold; sequence IKADNTCSFAKCTASTTTLGQFCMHCSRRYCLSHHLPEIHGCGEKARAHA. Residues C891, C896, C907, C910, C915, H918, H924, and C926 each coordinate Zn(2+). The span at 954-972 shows a compositional bias: basic and acidic residues; it reads ALDPAKRAQLQRRLDKKLG. The segment at 954–989 is disordered; it reads ALDPAKRAQLQRRLDKKLGELSSQRTSKRKEKERGT.

It belongs to the DNA2/NAM7 helicase family. In terms of assembly, homooligomer. Interacts with RUVBL1. Interacts with RUVBL2. Interacts with GTF3C1. Interacts with ABT1. Interacts with ribosomes. High expression in brain and testis, moderate in heart, spleen, and kidney, and low in other tissues.

It localises to the nucleus. The protein resides in the cytoplasm. Its subcellular location is the cell projection. The protein localises to the axon. The catalysed reaction is ATP + H2O = ADP + phosphate + H(+). Its function is as follows. 5' to 3' helicase that unwinds RNA and DNA duplexes in an ATP-dependent reaction. Specific to 5'-phosphorylated single-stranded guanine-rich sequences. May play a role in RNA metabolism, ribosome biogenesis or initiation of translation. May play a role in regulation of transcription. Interacts with tRNA-Tyr. The sequence is that of DNA-binding protein SMUBP-2 (IGHMBP2) from Mesocricetus auratus (Golden hamster).